The sequence spans 1021 residues: Solute carrier family 12 member 3 (1021 aa).

The Cytoplasmic segment spans residues 1–137; the sequence is MAELPTTETP…KNPEEPVRFG (137 aa). Ser-43 is modified (phosphoserine). A Phosphothreonine; by OXSR1 and STK39 modification is found at Thr-46. Ser-49 is modified (phosphoserine). Thr-50 is subject to Phosphothreonine. Phosphothreonine; by OXSR1 and STK39 occurs at positions 55 and 60. Residue Ser-73 is modified to Phosphoserine. Ser-91 bears the Phosphoserine; by OXSR1 and STK39 mark. Residue Thr-124 is modified to Phosphothreonine. Ser-126 is subject to Phosphoserine. A discontinuously helical transmembrane segment spans residues 138-167; that stretch reads WVKGVMIRCMLNIWGVILYLRLPWITAQAG. Leu-148 lines the Na(+) pocket. Asn-149 is a binding site for polythiazide. Trp-151 contributes to the Na(+) binding site. A helical transmembrane segment spans residues 168–189; sequence IVLTWIIILLSVTVTSITGLSI. Residues 190-220 lie on the Cytoplasmic side of the membrane; it reads SAISTNGKVKSGGTYFLISRSLGPELGGSIG. A helical membrane pass occupies residues 221–243; the sequence is LIFAFANAVGVAMHTVGFAETVR. Positions 227 and 234 each coordinate polythiazide. Over 244–255 the chain is Extracellular; sequence DLLQEYGAPIVD. The next 2 helical transmembrane spans lie at 256 to 280 and 281 to 303; these read PIND…AGME and WESK…YLVG. At 304–338 the chain is on the extracellular side; sequence TLIPPSEDKASKGFFSYRADIFVQNLVPDWRGPDG. The discontinuously helical transmembrane segment at 339–360 threads the bilayer; the sequence is TFFGMFSIFFPSATGILAGANI. Thr-352 contacts polythiazide. Gly-353, Ile-354, and Leu-355 together coordinate chloride. Asn-359 is a binding site for polythiazide. The Cytoplasmic portion of the chain corresponds to 361 to 371; sequence SGDLKDPAIAI. The chain crosses the membrane as a helical span at residues 372 to 393; sequence PKGTLMAIFWTTISYLAISATI. The Extracellular portion of the chain corresponds to 394–453; it reads GSCVVRDASGVLNDTVTPGWGACEGLACSYGWNFTECTQQHSCHYGLINYYQTMSMVSGF. Asn-406 is a glycosylation site (N-linked (GlcNAc...) asparagine). Residues Cys-416 and Cys-421 are joined by a disulfide bond. N-linked (GlcNAc...) asparagine glycosylation occurs at Asn-426. Cys-430 and Cys-436 form a disulfide bridge. Residues 454–477 traverse the membrane as a helical segment; the sequence is APLITAGIFGATLSSALACLVSAA. Residues Ala-464, Ser-467, and Ser-468 each contribute to the Na(+) site. The Cytoplasmic portion of the chain corresponds to 478–507; sequence KVFQCLCEDQLYPLIGFFGKGYGKNKEPVR. Residues 508 to 522 traverse the membrane as a helical segment; sequence GYLLAYAIAVAFIII. Over 523 to 527 the chain is Extracellular; the sequence is AELNT. The helical transmembrane segment at 528–544 threads the bilayer; sequence IAPIISNFFLCSYALIN. Tyr-540 serves as a coordination point for chloride. Residues 545 to 567 are Cytoplasmic-facing; sequence FSCFHASITNSPGWRPSFQYYNK. A run of 2 helical transmembrane segments spans residues 568–587 and 588–599; these read WAAL…LTWW and AALIAIGVVLFL. Residues 600–1021 lie on the Cytoplasmic side of the membrane; it reads LLYVIYKKPE…QENVLTFYCQ (422 aa). Residues 615 to 630 are scissor helix; the sequence is SVQAGSYNLALSYSVG. 6 residues coordinate ATP: Leu-648, Arg-655, Val-677, Gly-741, Leu-780, and Asn-781.

The protein belongs to the SLC12A transporter family. As to quaternary structure, homodimer; adopts a domain-swap conformation at the scissor helices connecting the transmembrane domain and C-terminal domain. Interacts with KLHL3. Interacts with IL18R1; this interaction is increased by IL18 treatment. Post-translationally, ubiquitinated; ubiquitination is essential for regulation of endocytosis. The BCR(KLHL3) complex was initially identified as a candidate ubiquitin ligase for SLC12A3. However, it was later shown that it is not the case. In terms of processing, phosphorylated at Thr-46, Thr-55, Thr-60 and Ser-91 by OXSR1/OSR1 and STK39/SPAK downstream of WNK4, promoting its activity. Phosphorylated in response to IL18. As to expression, predominantly expressed in the kidney (at protein level). Localizes to the distal convoluted tubules (at protein level). Not detected in normal aorta, but abundantly expressed in fatty streaks and advanced atherosclerotic lesions (at protein level).

Its subcellular location is the cell membrane. It is found in the apical cell membrane. The enzyme catalyses chloride(out) + Na(+)(out) = chloride(in) + Na(+)(in). Its activity is regulated as follows. Phosphorylation by OXSR1/OSR1 and STK39/SPAK in kidney distal convoluted tubules downstream of WNK4 promotes its activity. Also activated by OXSR1/OSR1 and STK39/SPAK downstream of WNK3. Target of thiazide diuretics used in the treatment of high blood pressure. Thiazide drugs, such as polythiazide, specifically inhibit SLC12A3/NCC transporter activity by competing with chloride for binding and by locking SLC12A3/NCC in an outward-facing conformation. Electroneutral sodium and chloride ion cotransporter, which acts as a key mediator of sodium and chloride reabsorption in kidney distal convoluted tubules. Also acts as a receptor for the pro-inflammatory cytokine IL18, thereby contributing to IL18-induced cytokine production, including IFNG, IL6, IL18 and CCL2. May act either independently of IL18R1, or in a complex with IL18R1. In Homo sapiens (Human), this protein is Solute carrier family 12 member 3.